We begin with the raw amino-acid sequence, 504 residues long: Anaerobic nitric oxide reductase transcription regulator NorR (504 aa).

Position 57 is a 4-aspartylphosphate (Asp57). The 230-residue stretch at 187–416 folds into the Sigma-54 factor interaction domain; it reads MIGLSPGMTQ…LEHAIHRAVV (230 aa). Residues 215–222 and 278–287 contribute to the ATP site; these read GETGTGKE and ADNGTLFLDE. Residues 479–498 constitute a DNA-binding region (H-T-H motif); that stretch reads WAACARMLETDVANLHRLAK.

Its pathway is nitrogen metabolism; nitric oxide reduction. Functionally, required for the expression of anaerobic nitric oxide (NO) reductase, acts as a transcriptional activator for at least the norVW operon. Activation also requires sigma-54. The polypeptide is Anaerobic nitric oxide reductase transcription regulator NorR (Escherichia coli O9:H4 (strain HS)).